The following is a 647-amino-acid chain: Auxin efflux carrier component 2 (647 aa).

Residues methionine 1–methionine 7 lie on the Extracellular side of the membrane. Residues tyrosine 8 to valine 28 traverse the membrane as a helical segment. The Cytoplasmic portion of the chain corresponds to arginine 29 to glutamine 38. The chain crosses the membrane as a helical span at residues cysteine 39–isoleucine 59. Residue valine 51 participates in (indol-3-yl)acetate binding. At serine 60 to asparagine 68 the chain is on the extracellular side. Residues tyrosine 69–tryptophan 89 form a helical membrane-spanning segment. Topologically, residues glutamine 90–tryptophan 100 are cytoplasmic. Residues methionine 101 to leucine 121 form a helical membrane-spanning segment. The (indol-3-yl)acetate site is built by asparagine 112 and leucine 114. The Extracellular portion of the chain corresponds to arginine 122–asparagine 131. The helical transmembrane segment at leucine 132 to phenylalanine 152 threads the bilayer. Residue tyrosine 145 coordinates (indol-3-yl)acetate. Residues glutamate 153 to serine 507 are Cytoplasmic-facing. A phosphoserine mark is found at serine 237, serine 258, and serine 310. The disordered stretch occupies residues serine 339–asparagine 380. Threonine 354 is modified (phosphothreonine). Over residues glycine 366–glycine 378 the composition is skewed to gly residues. A Phosphoserine modification is found at serine 393. 2 disordered regions span residues glutamate 397–isoleucine 420 and proline 440–proline 481. The helical transmembrane segment at leucine 508–methionine 528 threads the bilayer. Over serine 529 to serine 531 the chain is Extracellular. Residues isoleucine 532–alanine 552 form a helical membrane-spanning segment. Residues leucine 553–alanine 568 are Cytoplasmic-facing. The helical transmembrane segment at methionine 569 to isoleucine 589 threads the bilayer. The Extracellular segment spans residues arginine 590–aspartate 592. Residues leucine 593–alanine 613 form a helical membrane-spanning segment. Residues isoleucine 607 and valine 608 each coordinate (indol-3-yl)acetate. The Cytoplasmic portion of the chain corresponds to lysine 614–alanine 626. A helical membrane pass occupies residues valine 627 to leucine 647.

This sequence belongs to the auxin efflux carrier (TC 2.A.69.1) family. In terms of assembly, homodimer. Interacts with FYPP1 and FYPP3. Component of a complex made of PINs (e.g. PIN1 and PIN2), MAB4/MELs (e.g. NPY1/MAB4 and NPY5/MEL1) and AGC kinases (e.g. D6PK and PID) at the plasma membrane. Binds directly to NPY1/MAB4, NPY5/MEL1 and PID. As to expression, root-specific. Localized to the cortex, epidermis and lateral root cap, predominantly at the upper side of cells.

The protein localises to the cell membrane. Its function is as follows. Acts as a component of the auxin efflux carrier. Seems to be involved in the root-specific auxin transport, and mediates the root gravitropism. Its particular localization suggests a role in the translocation of auxin towards the elongation zone. Recrutes NPY proteins (e.g. NPY1/MAB4 and NPY5/MEL1) to the plasma membrane in a polar basal localization in root epidermis; this activity is optimized by AGC kinases-mediated (e.g. D6PK and PID) phosphorylation that limits their lateral diffusion-based escape. The sequence is that of Auxin efflux carrier component 2 from Arabidopsis thaliana (Mouse-ear cress).